We begin with the raw amino-acid sequence, 699 residues long: MAPKFEWWAKGNNNNTRKGTPVVVKMENPNNWSMVELESPSHDDFLVRTHEKSRNKNARQLTWVLLLKAHRAAGCLTSLGSALFALGTAVRRRIAAGRTDIEISSSGVGSLQKQNHTKKSKLFYSCLKVFLWLSLILLGFEIAAYFKGWSFGTSKLQLQFIFNKGFFDWVYTRWVLLRVEYLAPPLQFLANGCIVLFLVQSLDRLILCLGCFWIRFKKIKPVPKPDSISDLESGDNGAFLPMVLVQIPMCNEKEVYQQSIAAVCNLDWPKGKILIQILDDSDDPITQSLIKEEVHKWQKLGARIVYRHRVNREGYKAGNLKSAMNCSYVKDYEFVAIFDADFQPLPDFLKKTIPHFKDNEEIGLVQARWSFVNKEENLLTRLQNINLAFHFEVEQQVNSVFLNFFGFNGTAGVWRIKALEDSGGWLERTTVEDMDIAVRAHLHGWKFVFLNDVECQCELPESYEAYRKQQHRWHSGPMQLFRLCLPAVIKSKISIGKKFNLIFLFFLLRKLILPFYSFTLFCIILPMTMFVPEAELPAWVVCYIPATMSFLNILPAPKSFPFIVPYLLFENTMSVTKFNAMVSGLFQLGSAYEWVVTKKSGRSSEGDLAALVEKDEKTTKHQRGVSAPETEAEKKAEKTKRKKKKHNRIYMKELSLAFLLLTAATRSLLSAQGIHFYFLLFQGISFLLVGLDLIGEQVE.

The next 2 membrane-spanning stretches (helical) occupy residues 126–146 (CLKV…AAYF) and 194–214 (IVLF…CFWI). Asp-280 is an active-site residue. Residues Asp-339 and Asp-341 each coordinate substrate. Asp-433 is an active-site residue. Helical transmembrane passes span 511–531 (LILP…TMFV) and 536–556 (LPAW…ILPA). Residues 616–646 (EKTTKHQRGVSAPETEAEKKAEKTKRKKKKH) form a disordered region. Glycyl lysine isopeptide (Lys-Gly) (interchain with G-Cter in ubiquitin) cross-links involve residues Lys-617 and Lys-620. Residue Ser-626 is modified to Phosphoserine. Positions 637-646 (EKTKRKKKKH) are enriched in basic residues. Helical transmembrane passes span 649–668 (IYMK…TRSL) and 674–694 (IHFY…LDLI).

This sequence belongs to the glycosyltransferase 2 family. Plant cellulose synthase-like C subfamily. In terms of assembly, homodimer. As to expression, mainly expressed in roots, flowers and seeds, and, at very low levels, in seedlings, leaves and stems.

Its subcellular location is the golgi apparatus membrane. Its function is as follows. Probable beta-1,4-glucan synthase rather involved in the synthesis of the xyloglucan backbone than cellulose. Seems to work simultaneously with xyloglucan 6-xylosyltransferase. Xyloglucan is a noncellulosic polysaccharides of plant cell wall and consists of a glucan backbone substituted by xylose, galactose and fucose. The chain is Probable xyloglucan glycosyltransferase 12 from Arabidopsis thaliana (Mouse-ear cress).